The sequence spans 159 residues: Ribosomal RNA large subunit methyltransferase H (159 aa).

S-adenosyl-L-methionine is bound by residues L76, G108, and 127 to 132; that span reads FGQLTL.

It belongs to the RNA methyltransferase RlmH family. Homodimer.

It localises to the cytoplasm. It carries out the reaction pseudouridine(1915) in 23S rRNA + S-adenosyl-L-methionine = N(3)-methylpseudouridine(1915) in 23S rRNA + S-adenosyl-L-homocysteine + H(+). Functionally, specifically methylates the pseudouridine at position 1915 (m3Psi1915) in 23S rRNA. The chain is Ribosomal RNA large subunit methyltransferase H from Streptococcus suis (strain 05ZYH33).